The chain runs to 512 residues: MNARALLCSSNIHSLYTSNRPPEKTSSSRSLRNLKPSPKSLRVWIYPRNRSSVFRVLVRSSDKSESSNSYYVEGDKVSGNNDVVSDSPSSIVLPWWEEFPKRWVIVLLCFSAFLLCNMDRVNMSIAILPMSAEYGWNPATVGLIQSSFFWGYLLTQIAGGIWADTVGGKRVLGFGVIWWSIATILTPVAAKLGLPYLLVVRAFMGVGEGVAMPAMNNILSKWVPVQERSRSLALVYSGMYLGSVTGLAFSPFLIHQFGWPSVFYSFGSLGTVWLTLWLTKAESSPLEDPTLLPEERKLIADNCASKEPVKSIPWRLILSKPPVWALISCHFCHNWGTFILLTWMPTYYHQVLKFNLMESGLLSVFPWMTMAISANAGGWIADTLVSRGFSVTNVRKIMQTIGFLGPAFFLTQLKHIDSPTMAVLCMACSQGTDAFSQSGLYSNHQDIAPRYSGVLLGLSNTAGVLAGVLGTAATGHILQHGSWDDVFTISVGLYLVGTVIWNLFSTGEKIID.

The transit peptide at 1 to 59 directs the protein to the chloroplast; sequence MNARALLCSSNIHSLYTSNRPPEKTSSSRSLRNLKPSPKSLRVWIYPRNRSSVFRVLVR. The next 11 helical transmembrane spans lie at 103-123, 141-161, 171-191, 192-212, 234-254, 257-277, 323-343, 361-381, 401-421, 453-473, and 486-506; these read WVIV…RVNM, VGLI…AGGI, VLGF…VAAK, LGLP…GVAM, LVYS…PFLI, FGWP…LTLW, VWAL…LLTW, LLSV…GWIA, IGFL…SPTM, GVLL…GTAA, and VFTI…LFST.

It belongs to the major facilitator superfamily. Sodium/anion cotransporter (TC 2.A.1.14) family. As to expression, expressed in flower buds, sepals of mature flowers and mature leaves, less in senescent leaves and at low levels in roots.

The protein localises to the plastid. It is found in the chloroplast thylakoid membrane. Its function is as follows. Specific for inorganic phosphate transport across the thylakoid membrane in a sodium dependent manner. Binds glutamate but cannot transport it. May act as an ascorbate transporter at the thylakoid membrane. This chain is Sodium-dependent phosphate transport protein 1, chloroplastic (ANTR1), found in Arabidopsis thaliana (Mouse-ear cress).